Consider the following 291-residue polypeptide: Glycine--tRNA ligase alpha subunit (291 aa).

The protein belongs to the class-II aminoacyl-tRNA synthetase family. In terms of assembly, tetramer of two alpha and two beta subunits.

Its subcellular location is the cytoplasm. It catalyses the reaction tRNA(Gly) + glycine + ATP = glycyl-tRNA(Gly) + AMP + diphosphate. In Rhizorhabdus wittichii (strain DSM 6014 / CCUG 31198 / JCM 15750 / NBRC 105917 / EY 4224 / RW1) (Sphingomonas wittichii), this protein is Glycine--tRNA ligase alpha subunit.